A 216-amino-acid polypeptide reads, in one-letter code: MPLYVIDKPITLHILTQLRDKYTDQINFRKNLVRLGRILGYEISNTLDYEIVEVETPLGVKTKGVDITDLNNIVIINILRAAVPLVEGLLKAFPKARQGVIGASRVEVDGKEVPKDMDVYIYYKKIPDIRAKVDNVIIADPMIATASTMLKVLEEVVKANPKRIYIVSIISSEYGVNKILSKYPFIYLFTVAIDPELNNKGYILPGLGDAGDRAFG.

CTP-binding positions include 29 to 30 and arginine 37; that span reads RK. 30–34 contacts GTP; sequence KNLVR. A 5-phospho-alpha-D-ribose 1-diphosphate-binding site is contributed by arginine 80. Position 87-96 (87-96) interacts with CTP; sequence EGLLKAFPKA. 5-phospho-alpha-D-ribose 1-diphosphate contacts are provided by residues arginine 105 and 140–148; that span reads DPMIATAST. Residues isoleucine 203 and 208-210 each bind uracil; that span reads GDA. Aspartate 209 lines the 5-phospho-alpha-D-ribose 1-diphosphate pocket.

It belongs to the UPRTase family. As to quaternary structure, homotetramer. The cofactor is Mg(2+).

The enzyme catalyses UMP + diphosphate = 5-phospho-alpha-D-ribose 1-diphosphate + uracil. Its pathway is pyrimidine metabolism; UMP biosynthesis via salvage pathway; UMP from uracil: step 1/1. With respect to regulation, allosterically activated by GTP. Inhibited by CTP and UMP in combination. In terms of biological role, catalyzes the conversion of uracil and 5-phospho-alpha-D-ribose 1-diphosphate (PRPP) to UMP and diphosphate. The protein is Uracil phosphoribosyltransferase (upp) of Saccharolobus solfataricus (strain ATCC 35092 / DSM 1617 / JCM 11322 / P2) (Sulfolobus solfataricus).